Consider the following 1439-residue polypeptide: DNA-directed RNA polymerase subunit beta' (1439 aa).

4 residues coordinate Zn(2+): C70, C72, C85, and C88. D504, D506, and D508 together coordinate Mg(2+). Zn(2+) is bound by residues C862, C936, C943, and C946.

Belongs to the RNA polymerase beta' chain family. As to quaternary structure, the RNAP catalytic core consists of 2 alpha, 1 beta, 1 beta' and 1 omega subunit. When a sigma factor is associated with the core the holoenzyme is formed, which can initiate transcription. Requires Mg(2+) as cofactor. The cofactor is Zn(2+).

The enzyme catalyses RNA(n) + a ribonucleoside 5'-triphosphate = RNA(n+1) + diphosphate. In terms of biological role, DNA-dependent RNA polymerase catalyzes the transcription of DNA into RNA using the four ribonucleoside triphosphates as substrates. The chain is DNA-directed RNA polymerase subunit beta' from Gluconobacter oxydans (strain 621H) (Gluconobacter suboxydans).